Here is a 420-residue protein sequence, read N- to C-terminus: uncharacterized protein (420 aa).

Transmembrane regions (helical) follow at residues 26–46 (IFLL…QSVI), 66–86 (SAIK…WFTF), 231–251 (VILA…ATVL), 276–296 (IPVN…PSLL), 317–337 (GFLV…SIAF), and 369–389 (IDIL…FLTI).

The protein belongs to the CbiQ family.

It localises to the cell membrane. This is an uncharacterized protein from Mycoplasma genitalium (strain ATCC 33530 / DSM 19775 / NCTC 10195 / G37) (Mycoplasmoides genitalium).